Here is a 122-residue protein sequence, read N- to C-terminus: UPF0102 protein Ping_1176 (122 aa).

The protein belongs to the UPF0102 family.

This Psychromonas ingrahamii (strain DSM 17664 / CCUG 51855 / 37) protein is UPF0102 protein Ping_1176.